A 457-amino-acid chain; its full sequence is Methylenetetrahydrofolate--tRNA-(uracil-5-)-methyltransferase TrmFO (457 aa).

7–12 (GAGLAG) is an FAD binding site. Residues 38–58 (FTSRQDEKTGTHDVRNATQTR) are disordered. Over residues 40–52 (SRQDEKTGTHDVR) the composition is skewed to basic and acidic residues.

It belongs to the MnmG family. TrmFO subfamily. FAD is required as a cofactor.

It localises to the cytoplasm. The catalysed reaction is uridine(54) in tRNA + (6R)-5,10-methylene-5,6,7,8-tetrahydrofolate + NADH + H(+) = 5-methyluridine(54) in tRNA + (6S)-5,6,7,8-tetrahydrofolate + NAD(+). It carries out the reaction uridine(54) in tRNA + (6R)-5,10-methylene-5,6,7,8-tetrahydrofolate + NADPH + H(+) = 5-methyluridine(54) in tRNA + (6S)-5,6,7,8-tetrahydrofolate + NADP(+). In terms of biological role, catalyzes the folate-dependent formation of 5-methyl-uridine at position 54 (M-5-U54) in all tRNAs. The sequence is that of Methylenetetrahydrofolate--tRNA-(uracil-5-)-methyltransferase TrmFO from Hydrogenobaculum sp. (strain Y04AAS1).